Consider the following 179-residue polypeptide: Probable phosphopantothenoylcysteine decarboxylase (179 aa).

Residue N124 participates in substrate binding. C157 (proton donor) is an active-site residue.

Belongs to the HFCD (homooligomeric flavin containing Cys decarboxylase) superfamily. Requires FMN as cofactor.

The enzyme catalyses N-[(R)-4-phosphopantothenoyl]-L-cysteine + H(+) = (R)-4'-phosphopantetheine + CO2. It participates in cofactor biosynthesis; coenzyme A biosynthesis; CoA from (R)-pantothenate: step 3/5. Functionally, catalyzes the decarboxylation of 4'-phosphopantothenoylcysteine to 4'-phosphopantetheine. In Streptococcus mutans serotype c (strain ATCC 700610 / UA159), this protein is Probable phosphopantothenoylcysteine decarboxylase (coaC).